The chain runs to 82 residues: Neuropeptide-like peptide 36 (82 aa).

In Caenorhabditis elegans, this protein is Neuropeptide-like peptide 36 (nlp-36).